The following is a 365-amino-acid chain: Histidinol-phosphate aminotransferase 2 (365 aa).

Lysine 222 is subject to N6-(pyridoxal phosphate)lysine.

Belongs to the class-II pyridoxal-phosphate-dependent aminotransferase family. Histidinol-phosphate aminotransferase subfamily. Homodimer. It depends on pyridoxal 5'-phosphate as a cofactor.

It catalyses the reaction L-histidinol phosphate + 2-oxoglutarate = 3-(imidazol-4-yl)-2-oxopropyl phosphate + L-glutamate. It participates in amino-acid biosynthesis; L-histidine biosynthesis; L-histidine from 5-phospho-alpha-D-ribose 1-diphosphate: step 7/9. The protein is Histidinol-phosphate aminotransferase 2 (hisC2) of Bordetella bronchiseptica (strain ATCC BAA-588 / NCTC 13252 / RB50) (Alcaligenes bronchisepticus).